A 263-amino-acid polypeptide reads, in one-letter code: Phosphonoacetaldehyde hydrolase (263 aa).

Asp-10 (nucleophile) is an active-site residue. 2 residues coordinate Mg(2+): Asp-10 and Ala-12. The active-site Schiff-base intermediate with substrate is Lys-51. Asp-184 is a Mg(2+) binding site.

This sequence belongs to the HAD-like hydrolase superfamily. PhnX family. In terms of assembly, homodimer. Mg(2+) serves as cofactor.

The catalysed reaction is phosphonoacetaldehyde + H2O = acetaldehyde + phosphate + H(+). In terms of biological role, involved in phosphonate degradation. The sequence is that of Phosphonoacetaldehyde hydrolase from Bacteroides fragilis (strain ATCC 25285 / DSM 2151 / CCUG 4856 / JCM 11019 / LMG 10263 / NCTC 9343 / Onslow / VPI 2553 / EN-2).